The sequence spans 478 residues: MSVCTEIDYKLYTELRKIAGNSLFLFNEDGDFVEVVSNSSFKFLLPVGLFSSMDIPLKKPIECNTDNDIEHSKNVVMPNLYPFQERVASEVLSSIKKKVELKRPMYVTLHLACGFGKTITTCYLLSVHKKKAVICLPNKMLINQWKRAIESININHLVSVDGVGNLLKELVKKPADILIIVSRHLSNKEFCKKIHVDYDVFVLDESHMYNLMNNSTVTRFLTYYPPKICYFLTATPRRVNRIYCNDVINVSNSSDLKKYIKIVEFFFETYSSDTIRQMVKKLNTNYNKYHMYTEKILAEDVPRNKLILDTIIYDFEKMIVNRLIIVTKLRKHMMFFYTNLIEKFGSDIVYLGDAKNKNISDIVKKIKSINRFIFISTTNYSGTGLDVPTLDSLVICSAVMNSMQIEQILGRICRYSISKTRTVIVFPNTSIKEIKHMIGFFTQKIITLAIEKLGFKKIDKKGNKQEFALCKAFNLQTR.

The Helicase ATP-binding domain maps to lysine 98–serine 254. Leucine 111–threonine 118 provides a ligand contact to ATP. Positions aspartate 204–histidine 207 match the DESH box motif. A Helicase C-terminal domain is found at isoleucine 307–glycine 454.

It belongs to the helicase family. Poxviruses subfamily. In terms of assembly, interacts with G2. Might be part of a transcription complex composed at least of G2, A18, and H5.

The protein localises to the virion. Its function is as follows. DNA helicase which seems to act as a postreplicative transcription termination factor. Involved in ATP-dependent release of nascent RNA. Forms a stable complex with single-stranded DNA, and to a lesser extent RNA. In Erythrocebus patas (Red guenon), this protein is Transcript termination protein A18.